We begin with the raw amino-acid sequence, 282 residues long: MGQIINGKEVALKVKEEIKNFVNNRKEKNLQVPKIASILVGNDGGSIYYMGSQEKVANSLGVEFLKLTLPETCNDEDVIAEINKLNEDNNIHGIILQLPLPNNFDEKKIIKQISPNKDIDCLTFESQGKLYMGEPKFLPCTPNSVITLIKSLNIDIVGKNVVVLGRSNIVGKPVAQLLLNENATVTICHSKTKNLREVCKNADILVVAIGRPKFIDETYVNENAIVIDVGTSSFEGKITGDVDFDKVIDKCRYLTPVPGGVGSLTTTLLIKNACEALQENEY.

NADP(+)-binding positions include 165–167, Ser190, and Thr231; that span reads GRS.

This sequence belongs to the tetrahydrofolate dehydrogenase/cyclohydrolase family. Homodimer.

The catalysed reaction is (6R)-5,10-methylene-5,6,7,8-tetrahydrofolate + NADP(+) = (6R)-5,10-methenyltetrahydrofolate + NADPH. It catalyses the reaction (6R)-5,10-methenyltetrahydrofolate + H2O = (6R)-10-formyltetrahydrofolate + H(+). It participates in one-carbon metabolism; tetrahydrofolate interconversion. In terms of biological role, catalyzes the oxidation of 5,10-methylenetetrahydrofolate to 5,10-methenyltetrahydrofolate and then the hydrolysis of 5,10-methenyltetrahydrofolate to 10-formyltetrahydrofolate. The protein is Bifunctional protein FolD of Clostridium beijerinckii (strain ATCC 51743 / NCIMB 8052) (Clostridium acetobutylicum).